We begin with the raw amino-acid sequence, 479 residues long: Ribosomal RNA small subunit methyltransferase F (479 aa).

Residues 125–131 (AAAPGSK), Glu-149, Asp-176, and Asp-194 each bind S-adenosyl-L-methionine. Cys-247 acts as the Nucleophile in catalysis.

This sequence belongs to the class I-like SAM-binding methyltransferase superfamily. RsmB/NOP family.

The protein resides in the cytoplasm. The catalysed reaction is cytidine(1407) in 16S rRNA + S-adenosyl-L-methionine = 5-methylcytidine(1407) in 16S rRNA + S-adenosyl-L-homocysteine + H(+). In terms of biological role, specifically methylates the cytosine at position 1407 (m5C1407) of 16S rRNA. This Shigella boydii serotype 4 (strain Sb227) protein is Ribosomal RNA small subunit methyltransferase F.